A 506-amino-acid chain; its full sequence is Lysine--tRNA ligase (506 aa).

Mg(2+)-binding residues include E416 and E423.

The protein belongs to the class-II aminoacyl-tRNA synthetase family. As to quaternary structure, homodimer. Mg(2+) is required as a cofactor.

The protein localises to the cytoplasm. It carries out the reaction tRNA(Lys) + L-lysine + ATP = L-lysyl-tRNA(Lys) + AMP + diphosphate. The protein is Lysine--tRNA ligase of Bordetella parapertussis (strain 12822 / ATCC BAA-587 / NCTC 13253).